Reading from the N-terminus, the 146-residue chain is MILKADVKGTGKKGQTVEVADGYARNYLIPRGLAVAASEGALRSIEAERKAQQEKQQRQVAELSALRDRLDGQTIQLRAKCGEGGRLFGSVTNKDVADAIARHIGKPFDRKMVELDAPIKTLGVHLVTLRFGHNITGKVNVEVLPE.

This sequence belongs to the bacterial ribosomal protein bL9 family.

Its function is as follows. Binds to the 23S rRNA. This Symbiobacterium thermophilum (strain DSM 24528 / JCM 14929 / IAM 14863 / T) protein is Large ribosomal subunit protein bL9.